The sequence spans 901 residues: Protein translocase subunit SecA (901 aa).

ATP is bound by residues glutamine 87, 105 to 109, and aspartate 512; that span reads GEGKT. Zn(2+) contacts are provided by cysteine 885, cysteine 887, cysteine 896, and histidine 897.

The protein belongs to the SecA family. In terms of assembly, monomer and homodimer. Part of the essential Sec protein translocation apparatus which comprises SecA, SecYEG and auxiliary proteins SecDF-YajC and YidC. The cofactor is Zn(2+).

The protein localises to the cell inner membrane. It is found in the cytoplasm. It catalyses the reaction ATP + H2O + cellular proteinSide 1 = ADP + phosphate + cellular proteinSide 2.. Part of the Sec protein translocase complex. Interacts with the SecYEG preprotein conducting channel. Has a central role in coupling the hydrolysis of ATP to the transfer of proteins into and across the cell membrane, serving both as a receptor for the preprotein-SecB complex and as an ATP-driven molecular motor driving the stepwise translocation of polypeptide chains across the membrane. The chain is Protein translocase subunit SecA from Salmonella schwarzengrund (strain CVM19633).